The chain runs to 470 residues: Tubulin gamma chain (470 aa).

Residue 144–150 participates in GTP binding; sequence AGGTGSG.

This sequence belongs to the tubulin family.

The protein localises to the cytoplasm. It is found in the cytoskeleton. Its subcellular location is the microtubule organizing center. The protein resides in the spindle pole body. Its function is as follows. Tubulin is the major constituent of microtubules. The gamma chain is found at microtubule organizing centers (MTOC) such as the spindle poles or the centrosome, suggesting that it is involved in the minus-end nucleation of microtubule assembly. The sequence is that of Tubulin gamma chain (TUB4) from Eremothecium gossypii (strain ATCC 10895 / CBS 109.51 / FGSC 9923 / NRRL Y-1056) (Yeast).